We begin with the raw amino-acid sequence, 64 residues long: Small ribosomal subunit protein eS17 (64 aa).

Belongs to the eukaryotic ribosomal protein eS17 family.

This Natronomonas pharaonis (strain ATCC 35678 / DSM 2160 / CIP 103997 / JCM 8858 / NBRC 14720 / NCIMB 2260 / Gabara) (Halobacterium pharaonis) protein is Small ribosomal subunit protein eS17.